A 516-amino-acid polypeptide reads, in one-letter code: MGMWEEASDTGMKGKKKKKDKNEEEEEERGKKERMVNLTLEMIYLLTGEHYIPRKKSDDGGALHAPGSVIQKENNKNDEKILELMSNIIQLLTGEVAIRTHHVSIYFSLDEWDNIKGNKVLYEEGIKEEPQQLHPLDCEYEDKRDITADLGGTLCYNNETSKIGAEGTDFCAKENLTISPVEQPPPANRIKEERASCEEGNQSDCSINPLTEQIQGTDKPTPIMGYSLNNSSANYIKEEVVQCHEGNHSDMRIITAPESILETNTSAAMIRCNLNTSLSASCEGGNQSDCRINELTEQIQGTDTPTGNIVLYICSECQKHFSTKAGLARHQKTHSVFVGEEHAYGRIHTEEKPFPCSECGKRFARRQHLTDHQSSHTGEKPYACSQCEKYFPHRSNLNRHLKLHKGEKPFPCSQCGKRFPCVSDLNIHRRVHTGERPYSCSECGKCFKHHSNLTNHQRTHTREKPFSCTECGKGFKDRSSLTVHHRTHTGEKPFSCTECGKGFKDRSSLTVHHRTH.

2 disordered regions span residues 1-33 and 200-220; these read MGMW…GKKE and GNQS…TDKP. The segment covering 200–218 has biased composition (polar residues); that stretch reads GNQSDCSINPLTEQIQGTD. 7 C2H2-type zinc fingers span residues 312-334, 354-376, 382-404, 410-432, 438-460, 466-488, and 494-516; these read YICS…QKTH, FPCS…QSSH, YACS…LKLH, FPCS…RRVH, YSCS…QRTH, and FSCT…HRTH.

This sequence belongs to the krueppel C2H2-type zinc-finger protein family.

The protein localises to the nucleus. In terms of biological role, may be involved in transcriptional regulation. In Xenopus laevis (African clawed frog), this protein is Gastrula zinc finger protein XlCGF53.1.